The following is a 169-amino-acid chain: Large ribosomal subunit protein uL10 (169 aa).

This sequence belongs to the universal ribosomal protein uL10 family. Part of the ribosomal stalk of the 50S ribosomal subunit. The N-terminus interacts with L11 and the large rRNA to form the base of the stalk. The C-terminus forms an elongated spine to which L12 dimers bind in a sequential fashion forming a multimeric L10(L12)X complex.

Its function is as follows. Forms part of the ribosomal stalk, playing a central role in the interaction of the ribosome with GTP-bound translation factors. The sequence is that of Large ribosomal subunit protein uL10 from Rickettsia peacockii (strain Rustic).